Consider the following 689-residue polypeptide: Glycine--tRNA ligase beta subunit (689 aa).

The protein belongs to the class-II aminoacyl-tRNA synthetase family. Tetramer of two alpha and two beta subunits.

The protein localises to the cytoplasm. It carries out the reaction tRNA(Gly) + glycine + ATP = glycyl-tRNA(Gly) + AMP + diphosphate. The chain is Glycine--tRNA ligase beta subunit from Shewanella baltica (strain OS223).